The primary structure comprises 202 residues: Adenylyl-sulfate kinase (202 aa).

35 to 42 (GLSGSGKS) is an ATP binding site. The active-site Phosphoserine intermediate is the S109.

This sequence belongs to the APS kinase family.

The enzyme catalyses adenosine 5'-phosphosulfate + ATP = 3'-phosphoadenylyl sulfate + ADP + H(+). The protein operates within sulfur metabolism; hydrogen sulfide biosynthesis; sulfite from sulfate: step 2/3. Its function is as follows. Catalyzes the synthesis of activated sulfate. In Bacteroides fragilis (strain ATCC 25285 / DSM 2151 / CCUG 4856 / JCM 11019 / LMG 10263 / NCTC 9343 / Onslow / VPI 2553 / EN-2), this protein is Adenylyl-sulfate kinase.